Here is a 22-residue protein sequence, read N- to C-terminus: Superoxide dismutase [Cu-Zn] 2 (22 aa).

Belongs to the Cu-Zn superoxide dismutase family. In terms of assembly, homodimer. Cu cation is required as a cofactor. It depends on Zn(2+) as a cofactor. As to expression, dominant isozyme in roots.

It localises to the cytoplasm. The catalysed reaction is 2 superoxide + 2 H(+) = H2O2 + O2. Destroys radicals which are normally produced within the cells and which are toxic to biological systems. The chain is Superoxide dismutase [Cu-Zn] 2 from Picea abies (Norway spruce).